The primary structure comprises 683 residues: Protein kinase C eta type (683 aa).

In terms of domain architecture, C2 spans 1 to 118 (MSSGTMKFNG…LRTAGTSDTF (118 aa)). 2 positions are modified to phosphoserine: Ser-28 and Ser-32. Phorbol-ester/DAG-type zinc fingers lie at residues 171–222 (GHKF…VTAC) and 245–295 (PHKF…APNC). Ser-317 is modified (phosphoserine). The 260-residue stretch at 355–614 (FEFIRVLGKG…EHEILRHPFF (260 aa)) folds into the Protein kinase domain. ATP contacts are provided by residues 361–369 (LGKGSFGKV) and Lys-384. The active-site Proton acceptor is the Asp-479. The residue at position 513 (Thr-513) is a Phosphothreonine; by PDPK1. Residues 615-683 (KEIDWVQLNH…FSYVSPELQP (69 aa)) enclose the AGC-kinase C-terminal domain. Thr-656 bears the Phosphothreonine mark. Ser-675 carries the post-translational modification Phosphoserine.

It belongs to the protein kinase superfamily. AGC Ser/Thr protein kinase family. PKC subfamily. Interacts with FYN. Interacts with RALA. Interacts with DGKQ.

It is found in the cytoplasm. The enzyme catalyses L-seryl-[protein] + ATP = O-phospho-L-seryl-[protein] + ADP + H(+). It catalyses the reaction L-threonyl-[protein] + ATP = O-phospho-L-threonyl-[protein] + ADP + H(+). With respect to regulation, novel PKCs (PRKCD, PRKCE, PRKCH and PRKCQ) are calcium-insensitive, but activated by diacylglycerol (DAG) and phosphatidylserine. Three specific sites; Thr-513 (activation loop of the kinase domain), Thr-656 (turn motif) and Ser-675 (hydrophobic region), need to be phosphorylated for its full activation. Functionally, calcium-independent, phospholipid- and diacylglycerol (DAG)-dependent serine/threonine-protein kinase that is involved in the regulation of cell differentiation in keratinocytes and pre-B cell receptor, mediates regulation of epithelial tight junction integrity and foam cell formation, and is required for glioblastoma proliferation and apoptosis prevention in MCF-7 cells. In keratinocytes, binds and activates the tyrosine kinase FYN, which in turn blocks epidermal growth factor receptor (EGFR) signaling and leads to keratinocyte growth arrest and differentiation. Associates with the cyclin CCNE1-CDK2-CDKN1B complex and inhibits CDK2 kinase activity, leading to RB1 dephosphorylation and thereby G1 arrest in keratinocytes. In association with RALA activates actin depolymerization, which is necessary for keratinocyte differentiation. In the pre-B cell receptor signaling, functions downstream of BLNK by up-regulating IRF4, which in turn activates L chain gene rearrangement. Regulates epithelial tight junctions (TJs) by phosphorylating occludin (OCLN) on threonine residues, which is necessary for the assembly and maintenance of TJs. In association with PLD2 and via TLR4 signaling, is involved in lipopolysaccharide (LPS)-induced RGS2 down-regulation and foam cell formation. Upon PMA stimulation, mediates glioblastoma cell proliferation by activating the mTOR pathway, the PI3K/AKT pathway and the ERK1-dependent phosphorylation of ELK1. Involved in the protection of glioblastoma cells from irradiation-induced apoptosis by preventing caspase-9 activation. In camptothecin-treated MCF-7 cells, regulates NF-kappa-B upstream signaling by activating IKBKB, and confers protection against DNA damage-induced apoptosis. Promotes oncogenic functions of ATF2 in the nucleus while blocking its apoptotic function at mitochondria. Phosphorylates ATF2 which promotes its nuclear retention and transcriptional activity and negatively regulates its mitochondrial localization. This Rattus norvegicus (Rat) protein is Protein kinase C eta type (Prkch).